Consider the following 83-residue polypeptide: Small ribosomal subunit protein uS17 (83 aa).

Belongs to the universal ribosomal protein uS17 family. In terms of assembly, part of the 30S ribosomal subunit.

One of the primary rRNA binding proteins, it binds specifically to the 5'-end of 16S ribosomal RNA. This Campylobacter jejuni subsp. jejuni serotype O:6 (strain 81116 / NCTC 11828) protein is Small ribosomal subunit protein uS17.